The primary structure comprises 82 residues: Lysis inhibition accessory protein (82 aa).

The protein belongs to the T4likevirus lysis inhibition accessory protein rIII family. In terms of assembly, homooligomer. Interacts with holin (via N-terminus).

Probably binds to the cytoplasmic part of the holin during lysis inhibition and stabilizes the holin-antiholin complex thereby resulting in a robust block of the hole formation. This chain is Lysis inhibition accessory protein (rIII), found in Escherichia coli (Bacteriophage T4).